We begin with the raw amino-acid sequence, 273 residues long: Flagellin FljN (273 aa).

Belongs to the bacterial flagellin family. In terms of assembly, in C.crescentus, the flagellar filament is composed of multiple flagellins of 29 kDa; 27 kDa and 25 kDa.

Its subcellular location is the secreted. It is found in the bacterial flagellum. In terms of biological role, flagellin is the subunit protein which polymerizes to form the filaments of bacterial flagella. This Caulobacter vibrioides (strain ATCC 19089 / CIP 103742 / CB 15) (Caulobacter crescentus) protein is Flagellin FljN (fljN).